We begin with the raw amino-acid sequence, 59 residues long: Venom protein 37.1 (59 aa).

A signal peptide spans 1–18 (MVSTLMIASVKLRLYCTA).

The protein belongs to the non-disulfide-bridged peptide (NDBP) superfamily. Long chain multifunctional peptide (group 2) family. As to expression, expressed by the venom gland.

The protein resides in the secreted. The sequence is that of Venom protein 37.1 from Lychas mucronatus (Chinese swimming scorpion).